We begin with the raw amino-acid sequence, 129 residues long: uncharacterized protein (129 aa).

The chain crosses the membrane as a helical span at residues 77-97 (ILAVFIISFIIVVVGVLLLGL). The interval 109–129 (SSNDKKLQSNDEEKQALAEKA) is disordered. Basic and acidic residues predominate over residues 111-129 (NDKKLQSNDEEKQALAEKA).

It is found in the vacuole membrane. This is an uncharacterized protein from Saccharomyces cerevisiae (strain ATCC 204508 / S288c) (Baker's yeast).